Here is a 25-residue protein sequence, read N- to C-terminus: Repetitive proline-rich cell wall protein (25 aa).

Positions 1–25 (NYDKPPVEKPPVYKPPVEKPPVYKP) are disordered. A run of 4 repeats spans residues 5–9 (PPVEK), 10–14 (PPVYK), 15–19 (PPVEK), and 20–24 (PPVYK). The tract at residues 5-24 (PPVEKPPVYKPPVEKPPVYK) is 4 X 5 AA tandem repeats of P-P-V-[EY]-K. Residues Pro-6, Pro-11, Pro-16, and Pro-21 each carry the 4-hydroxyproline modification. Residues 8–25 (EKPPVYKPPVEKPPVYKP) are compositionally biased toward pro residues.

It belongs to the plant proline-rich protein superfamily. ENOD12 family.

It is found in the secreted. Its subcellular location is the cell wall. In Phaseolus vulgaris (Kidney bean), this protein is Repetitive proline-rich cell wall protein.